A 95-amino-acid polypeptide reads, in one-letter code: Integration host factor subunit beta (95 aa).

It belongs to the bacterial histone-like protein family. In terms of assembly, heterodimer of an alpha and a beta chain.

This protein is one of the two subunits of integration host factor, a specific DNA-binding protein that functions in genetic recombination as well as in transcriptional and translational control. In Psychromonas ingrahamii (strain DSM 17664 / CCUG 51855 / 37), this protein is Integration host factor subunit beta.